A 170-amino-acid chain; its full sequence is Adenine phosphoribosyltransferase (170 aa).

The protein belongs to the purine/pyrimidine phosphoribosyltransferase family. Homodimer.

It localises to the cytoplasm. It catalyses the reaction AMP + diphosphate = 5-phospho-alpha-D-ribose 1-diphosphate + adenine. It participates in purine metabolism; AMP biosynthesis via salvage pathway; AMP from adenine: step 1/1. Its function is as follows. Catalyzes a salvage reaction resulting in the formation of AMP, that is energically less costly than de novo synthesis. This is Adenine phosphoribosyltransferase from Thermosynechococcus vestitus (strain NIES-2133 / IAM M-273 / BP-1).